The following is a 409-amino-acid chain: uncharacterized protein (409 aa).

The region spanning 5-274 is the OBG-type G domain; that stretch reads ILIGFVGKPS…LAKQGFVKYE (270 aa). GTP contacts are provided by residues 11 to 18 and 83 to 87; these read GKPSSGKS and DVAGL.

It belongs to the TRAFAC class OBG-HflX-like GTPase superfamily. OBG GTPase family.

It localises to the cytoplasm. The protein resides in the nucleus. This is an uncharacterized protein from Schizosaccharomyces pombe (strain 972 / ATCC 24843) (Fission yeast).